The sequence spans 113 residues: Large ribosomal subunit protein bL17 (113 aa).

Belongs to the bacterial ribosomal protein bL17 family. Part of the 50S ribosomal subunit. Contacts protein L32.

This chain is Large ribosomal subunit protein bL17, found in Caldicellulosiruptor saccharolyticus (strain ATCC 43494 / DSM 8903 / Tp8T 6331).